Reading from the N-terminus, the 165-residue chain is Nucleotide-binding protein Suden_0039 (165 aa).

It belongs to the YajQ family.

In terms of biological role, nucleotide-binding protein. In Sulfurimonas denitrificans (strain ATCC 33889 / DSM 1251) (Thiomicrospira denitrificans (strain ATCC 33889 / DSM 1251)), this protein is Nucleotide-binding protein Suden_0039.